The primary structure comprises 366 residues: MWNATLSEEPGYNLTLPDLGWDAPADNDSLTDELLPLFPAPLLAGVTATCVALFVVGIAGNLLTMLVVSRFRELRTTTNLYLSSMAFSDLLIFLCMPLDLVRLWQYRPWNFGDLLCKLFQFVSESCTYATVLTITALSVERYFAICFPLRAKVVVTKGRVKLVILVIWAVAFCSAGPIFVLVGVEHENGTDPRDTNECRATEFAVRSGLLTVMVWVSSVFFFLPVFCLTVLYSLIGRKLWRRKRGEAAVGASLRDQNHKQTVKMLAVVVFAFILCWLPFHVGRYLFSKSFEPGSLEIAQISQYCNLVSFVLFYLSAAINPILYNIMSKKYRVAVFKLLGFEPFSQRKLSTLKDESSRAWTETSINT.

At 1–40 (MWNATLSEEPGYNLTLPDLGWDAPADNDSLTDELLPLFPA) the chain is on the extracellular side. Residues Asn-3, Asn-13, and Asn-27 are each glycosylated (N-linked (GlcNAc...) asparagine). A helical transmembrane segment spans residues 41–66 (PLLAGVTATCVALFVVGIAGNLLTML). At 67-72 (VVSRFR) the chain is on the cytoplasmic side. A helical membrane pass occupies residues 73-96 (ELRTTTNLYLSSMAFSDLLIFLCM). Over 97 to 117 (PLDLVRLWQYRPWNFGDLLCK) the chain is Extracellular. Cysteines 116 and 198 form a disulfide. Residues 118-139 (LFQFVSESCTYATVLTITALSV) form a helical membrane-spanning segment. At 140-162 (ERYFAICFPLRAKVVVTKGRVKL) the chain is on the cytoplasmic side. Residues 163-183 (VILVIWAVAFCSAGPIFVLVG) traverse the membrane as a helical segment. The Extracellular segment spans residues 184–211 (VEHENGTDPRDTNECRATEFAVRSGLLT). N-linked (GlcNAc...) asparagine glycosylation is present at Asn-188. A helical membrane pass occupies residues 212 to 235 (VMVWVSSVFFFLPVFCLTVLYSLI). Topologically, residues 236–263 (GRKLWRRKRGEAAVGASLRDQNHKQTVK) are cytoplasmic. A helical transmembrane segment spans residues 264-285 (MLAVVVFAFILCWLPFHVGRYL). The Extracellular segment spans residues 286–302 (FSKSFEPGSLEIAQISQ). Residues 303 to 326 (YCNLVSFVLFYLSAAINPILYNIM) traverse the membrane as a helical segment. At 327–366 (SKKYRVAVFKLLGFEPFSQRKLSTLKDESSRAWTETSINT) the chain is on the cytoplasmic side.

It belongs to the G-protein coupled receptor 1 family.

Its subcellular location is the cell membrane. Its function is as follows. Receptor for ghrelin, coupled to G-alpha-11 proteins. Stimulates growth hormone secretion. Also binds other growth hormone releasing peptides (GHRP) (e.g. Met-enkephalin and GHRP-6) as well as non-peptide, low molecular weight secretagogues (e.g. L-692,429, MK-0677, adenosine). The chain is Growth hormone secretagogue receptor type 1 (GHSR) from Mustela putorius furo (European domestic ferret).